A 320-amino-acid polypeptide reads, in one-letter code: Aspartate carbamoyltransferase catalytic subunit (320 aa).

Residues Arg68 and Thr69 each contribute to the carbamoyl phosphate site. Lys96 contributes to the L-aspartate binding site. Carbamoyl phosphate-binding residues include Arg118, His148, and Gln151. 2 residues coordinate L-aspartate: Arg181 and Arg236. 2 residues coordinate carbamoyl phosphate: Gly277 and Pro278.

It belongs to the aspartate/ornithine carbamoyltransferase superfamily. ATCase family. In terms of assembly, heterododecamer (2C3:3R2) of six catalytic PyrB chains organized as two trimers (C3), and six regulatory PyrI chains organized as three dimers (R2).

It carries out the reaction carbamoyl phosphate + L-aspartate = N-carbamoyl-L-aspartate + phosphate + H(+). It participates in pyrimidine metabolism; UMP biosynthesis via de novo pathway; (S)-dihydroorotate from bicarbonate: step 2/3. Functionally, catalyzes the condensation of carbamoyl phosphate and aspartate to form carbamoyl aspartate and inorganic phosphate, the committed step in the de novo pyrimidine nucleotide biosynthesis pathway. The protein is Aspartate carbamoyltransferase catalytic subunit of Polaromonas sp. (strain JS666 / ATCC BAA-500).